A 212-amino-acid chain; its full sequence is Amelotin (212 aa).

A signal peptide spans 1–16; that stretch reads MKTVVLLLCLLGSAQS. Disordered stretches follow at residues 23–42 and 141–212; these read PALGAPATKPTPGQVTPLTQ and PSGQ…NRTK. Composition is skewed to polar residues over residues 33 to 42 and 165 to 178; these read TPGQVTPLTQ and PANQATTPGHTTPA.

The protein belongs to the amelotin family. O-glycosylated. Post-translationally, phosphorylated by FAM20C in vitro. Highest expression in the mandible. Found in the basal lamina of maturation stage ameloblasts of incisors and unerupted molars. Also found in the internal basal lamina of junctional epithelium in molars.

It is found in the secreted. Its function is as follows. Is a promoter of calcium phosphate mineralization, playing a critical role in the formation of the compact, mineralized, aprismatic enamel surface layer during the maturation stage of amelogenesis. This chain is Amelotin, found in Rattus norvegicus (Rat).